The primary structure comprises 235 residues: 2-C-methyl-D-erythritol 4-phosphate cytidylyltransferase (235 aa).

This sequence belongs to the IspD/TarI cytidylyltransferase family. IspD subfamily.

It catalyses the reaction 2-C-methyl-D-erythritol 4-phosphate + CTP + H(+) = 4-CDP-2-C-methyl-D-erythritol + diphosphate. Its pathway is isoprenoid biosynthesis; isopentenyl diphosphate biosynthesis via DXP pathway; isopentenyl diphosphate from 1-deoxy-D-xylulose 5-phosphate: step 2/6. In terms of biological role, catalyzes the formation of 4-diphosphocytidyl-2-C-methyl-D-erythritol from CTP and 2-C-methyl-D-erythritol 4-phosphate (MEP). The chain is 2-C-methyl-D-erythritol 4-phosphate cytidylyltransferase from Leptospira borgpetersenii serovar Hardjo-bovis (strain L550).